The chain runs to 197 residues: Probable GTP-binding protein EngB (197 aa).

The 173-residue stretch at 25–197 (SAPEIAFAGR…VRDEFFKFTR (173 aa)) folds into the EngB-type G domain. GTP-binding positions include 33-40 (GRSNVGKS), 60-64 (GCTRQ), 79-82 (DLPG), 146-149 (TKID), and 177-179 (ISV). Positions 40 and 62 each coordinate Mg(2+).

The protein belongs to the TRAFAC class TrmE-Era-EngA-EngB-Septin-like GTPase superfamily. EngB GTPase family. Mg(2+) is required as a cofactor.

Necessary for normal cell division and for the maintenance of normal septation. This chain is Probable GTP-binding protein EngB, found in Wolbachia sp. subsp. Brugia malayi (strain TRS).